A 2282-amino-acid chain; its full sequence is Zonadhesin (2282 aa).

MAM domains are found at residues Met-1–Glu-147 and Pro-150–Val-315. The Extracellular portion of the chain corresponds to Met-1–Ser-2235. Residues Asn-112 and Asn-272 are each glycosylated (N-linked (GlcNAc...) asparagine). The segment at Val-315–Thr-498 is 26 X approximate heptapeptide repeats (mucin-like domain). Residues Pro-333–Lys-356 are compositionally biased toward low complexity. Residues Pro-333–Ser-495 form a disordered region. Acidic residues predominate over residues Glu-360 to Thr-369. A compositionally biased stretch (pro residues) spans Thr-379–Val-398. Composition is skewed to low complexity over residues Pro-399–Pro-420 and Pro-427–Ser-495. One can recognise a TIL 1 domain in the interval Cys-501–Cys-550. N-linked (GlcNAc...) asparagine glycans are attached at residues Asn-541 and Asn-569. Residues Pro-551–Gln-605 form the VWFC 1 domain. In terms of domain architecture, VWFD 1 spans Ala-610–Gln-787. 2 disulfides stabilise this stretch: Cys-612-Cys-747 and Cys-634-Cys-786. Positions Cys-881 to Cys-934 constitute a TIL 2 domain. In terms of domain architecture, VWFC 2 spans Gly-935–His-990. Residues Ala-995–Phe-1176 form the VWFD 2 domain. 2 disulfides stabilise this stretch: Cys-997–Cys-1136 and Cys-1019–Cys-1175. N-linked (GlcNAc...) asparagine glycosylation is found at Asn-1141, Asn-1259, Asn-1270, Asn-1355, Asn-1467, and Asn-1483. The 56-residue stretch at Cys-1267–Cys-1322 folds into the TIL 3 domain. The VWFC 3 domain occupies Gly-1323–Arg-1379. One can recognise a VWFD 3 domain in the interval Gly-1384–Gln-1564. 2 cysteine pairs are disulfide-bonded: Cys-1386-Cys-1525 and Cys-1408-Cys-1563. Residues Pro-1561–Cys-1588 are disordered. Residues Gln-1577–Ala-1586 are compositionally biased toward polar residues. The N-linked (GlcNAc...) asparagine glycan is linked to Asn-1662. The region spanning Cys-1670–Cys-1726 is the TIL 4 domain. The region spanning Ser-1727–Val-1782 is the VWFC 4 domain. Residues Asp-1787–Val-1963 form the VWFD 4 domain. An intrachain disulfide couples Cys-1789 to Cys-1926. A glycan (N-linked (GlcNAc...) asparagine) is linked at Asn-1997. Residues Cys-2076–Cys-2129 enclose the TIL 5 domain. The 55-residue stretch at Gly-2130–Phe-2184 folds into the VWFC 5 domain. Asn-2178 is a glycosylation site (N-linked (GlcNAc...) asparagine). Residues Arg-2185–Thr-2221 form the EGF-like domain. Cystine bridges form between Cys-2189-Cys-2200, Cys-2194-Cys-2209, and Cys-2211-Cys-2220. Residues Asn-2236 to Ala-2256 form a helical membrane-spanning segment. Residues Arg-2257–Arg-2282 are Cytoplasmic-facing.

In terms of assembly, probably forms covalent oligomers.

It is found in the cell membrane. In terms of biological role, binds in a species-specific manner to the zona pellucida of the egg. May be involved in gamete recognition and/or signaling. This chain is Zonadhesin (ZAN), found in Oryctolagus cuniculus (Rabbit).